The sequence spans 344 residues: Polycomb group RING finger protein 2 (344 aa).

The RING-type zinc finger occupies 18–57 (CALCGGYFIDATTIVECLHSFCKTCIVRYLETNKYCPMCD). Residues K51 and K88 each participate in a glycyl lysine isopeptide (Lys-Gly) (interchain with G-Cter in SUMO2) cross-link. Positions 81 to 95 (KLVPGLFKDEMKRRR) match the Nuclear localization signal motif. A compositionally biased stretch (polar residues) spans 240-253 (TVPTPSEGTNTSGA). The segment at 240-344 (TVPTPSEGTN…VNGAPVPPLT (105 aa)) is disordered. A compositionally biased stretch (low complexity) spans 263-313 (APSPATLPATSSSLPSPATPSHGSPSSHGPPATHPTSPTPPSTASGATTAA). Positions 314–328 (NGGSLNCLQTPSSTS) are enriched in polar residues. At T344 the chain carries Phosphothreonine.

Exists as both a monomer and homodimer. Component of a PRC1-like complex. Interacts with CBX8, RING1 and RNF2. Interacts with CBX7. Interacts with PHC2. In terms of processing, phosphorylated. Homodimer formation is regulated by phosphorylation with only unphosphorylated proteins forming homodimers. Detected in all tissues examined with high expression found in placenta lung and kidney and low expression, in liver, pancreas and skeletal muscle.

The protein resides in the nucleus. Functionally, transcriptional repressor. Binds specifically to the DNA sequence 5'-GACTNGACT-3'. Has tumor suppressor activity. May play a role in control of cell proliferation and/or neural cell development. Regulates proliferation of early T progenitor cells by maintaining expression of HES1. Also plays a role in antero-posterior specification of the axial skeleton and negative regulation of the self-renewal activity of hematopoietic stem cells. Component of a Polycomb group (PcG) multiprotein PRC1-like complex, a complex class required to maintain the transcriptionally repressive state of many genes, including Hox genes, throughout development. PcG PRC1 complex acts via chromatin remodeling and modification of histones; it mediates monoubiquitination of histone H2A 'Lys-119', rendering chromatin heritably changed in its expressibility. Within the PRC1-like complex, regulates RNF2 ubiquitin ligase activity. This is Polycomb group RING finger protein 2 (PCGF2) from Homo sapiens (Human).